The primary structure comprises 775 residues: 5-methyltetrahydropteroyltriglutamate--homocysteine methyltransferase (775 aa).

5-methyltetrahydropteroyltri-L-glutamate is bound by residues 16–19 and lysine 115; that span reads REMK. Residues 435 to 437 and glutamate 488 each bind L-homocysteine; that span reads IGS. L-methionine contacts are provided by residues 435–437 and glutamate 488; that span reads IGS. 5-methyltetrahydropteroyltri-L-glutamate-binding positions include 519 to 520 and tryptophan 565; that span reads RC. Aspartate 603 lines the L-homocysteine pocket. Aspartate 603 provides a ligand contact to L-methionine. Glutamate 609 is a binding site for 5-methyltetrahydropteroyltri-L-glutamate. Residues histidine 645, cysteine 647, and glutamate 669 each contribute to the Zn(2+) site. Residue histidine 698 is the Proton donor of the active site. Cysteine 730 lines the Zn(2+) pocket.

This sequence belongs to the vitamin-B12 independent methionine synthase family. The cofactor is Zn(2+).

The enzyme catalyses 5-methyltetrahydropteroyltri-L-glutamate + L-homocysteine = tetrahydropteroyltri-L-glutamate + L-methionine. It participates in amino-acid biosynthesis; L-methionine biosynthesis via de novo pathway; L-methionine from L-homocysteine (MetE route): step 1/1. Functionally, catalyzes the transfer of a methyl group from 5-methyltetrahydrofolate to homocysteine resulting in methionine formation. The polypeptide is 5-methyltetrahydropteroyltriglutamate--homocysteine methyltransferase (Coxiella burnetii (strain RSA 331 / Henzerling II)).